The primary structure comprises 305 residues: Axin interactor, dorsalization-associated protein B (305 aa).

The segment covering 126–137 has biased composition (acidic residues); sequence ENLEVEEEEEDG. The disordered stretch occupies residues 126 to 146; it reads ENLEVEEEEEDGGAGAGSPDL. The tract at residues 153-220 is axin-binding; it reads GTLLPRLPSE…RKEDTYVHFN (68 aa). Residues 156–303 form the C2 Aida-type domain; it reads LPRLPSEPGM…LYLHLLQTLL (148 aa).

It belongs to the AIDA family.

Functionally, acts as a ventralizing factor during embryogenesis. Inhibits axin-mediated JNK activation by binding axin and disrupting axin homodimerization. This in turn antagonizes a Wnt/beta-catenin-independent dorsalization pathway activated by axin/JNK-signaling. The protein is Axin interactor, dorsalization-associated protein B (aida-b) of Xenopus laevis (African clawed frog).